We begin with the raw amino-acid sequence, 470 residues long: GTPase Der (470 aa).

2 EngA-type G domains span residues 2–165 and 201–372; these read KTIA…GLEA and IRVG…ENFS. Residues 8-15, 55-59, 117-120, 207-214, 254-258, and 318-321 contribute to the GTP site; these read GKPNVGKS, DTGGI, NKID, GKVNVGKS, DTAGI, and NKWD. The 85-residue stretch at 373-457 folds into the KH-like domain; sequence RRIPTSILNK…PILIRARKRG (85 aa).

This sequence belongs to the TRAFAC class TrmE-Era-EngA-EngB-Septin-like GTPase superfamily. EngA (Der) GTPase family. Associates with the 50S ribosomal subunit.

GTPase that plays an essential role in the late steps of ribosome biogenesis. This Wolinella succinogenes (strain ATCC 29543 / DSM 1740 / CCUG 13145 / JCM 31913 / LMG 7466 / NCTC 11488 / FDC 602W) (Vibrio succinogenes) protein is GTPase Der.